Consider the following 1097-residue polypeptide: Error-prone DNA polymerase (1097 aa).

Residues 1039–1097 (PTGRGDEFAHGSPGGGDSRDRSPPKPRDIVVPLCRARHKGIDPEPETMPSAFPKPRDFR) are disordered. Residues 1055–1066 (DSRDRSPPKPRD) are compositionally biased toward basic and acidic residues.

It belongs to the DNA polymerase type-C family. DnaE2 subfamily.

It localises to the cytoplasm. The catalysed reaction is DNA(n) + a 2'-deoxyribonucleoside 5'-triphosphate = DNA(n+1) + diphosphate. Its function is as follows. DNA polymerase involved in damage-induced mutagenesis and translesion synthesis (TLS). It is not the major replicative DNA polymerase. The protein is Error-prone DNA polymerase of Allorhizobium ampelinum (strain ATCC BAA-846 / DSM 112012 / S4) (Agrobacterium vitis (strain S4)).